The primary structure comprises 130 residues: UPF0251 protein MmarC6_0272 (130 aa).

It belongs to the UPF0251 family.

In Methanococcus maripaludis (strain C6 / ATCC BAA-1332), this protein is UPF0251 protein MmarC6_0272.